The primary structure comprises 230 residues: Cytochrome c oxidase subunit 2 (230 aa).

Residues 1 to 14 lie on the Mitochondrial intermembrane side of the membrane; that stretch reads MAHPTQLGFQDAAS. The chain crosses the membrane as a helical span at residues 15 to 45; that stretch reads PVMEELLHFHDHALMIVFLISTLVLYIIIAM. Residues 46–59 lie on the Mitochondrial matrix side of the membrane; the sequence is VSTKLTNKYILDSQ. A helical transmembrane segment spans residues 60-87; it reads EIEIVWTILPAVILVLIALPSLRILYLM. The Mitochondrial intermembrane portion of the chain corresponds to 88 to 230; that stretch reads DEINDPHLTI…NWSSLMLEDA (143 aa). Cu cation is bound by residues His-161, Cys-196, Glu-198, Cys-200, His-204, and Met-207. Residue Glu-198 coordinates Mg(2+).

This sequence belongs to the cytochrome c oxidase subunit 2 family. As to quaternary structure, component of the cytochrome c oxidase (complex IV, CIV), a multisubunit enzyme composed of 14 subunits. The complex is composed of a catalytic core of 3 subunits MT-CO1, MT-CO2 and MT-CO3, encoded in the mitochondrial DNA, and 11 supernumerary subunits COX4I, COX5A, COX5B, COX6A, COX6B, COX6C, COX7A, COX7B, COX7C, COX8 and NDUFA4, which are encoded in the nuclear genome. The complex exists as a monomer or a dimer and forms supercomplexes (SCs) in the inner mitochondrial membrane with NADH-ubiquinone oxidoreductase (complex I, CI) and ubiquinol-cytochrome c oxidoreductase (cytochrome b-c1 complex, complex III, CIII), resulting in different assemblies (supercomplex SCI(1)III(2)IV(1) and megacomplex MCI(2)III(2)IV(2)). Found in a complex with TMEM177, COA6, COX18, COX20, SCO1 and SCO2. Interacts with TMEM177 in a COX20-dependent manner. Interacts with COX20. Interacts with COX16. It depends on Cu cation as a cofactor.

The protein resides in the mitochondrion inner membrane. The catalysed reaction is 4 Fe(II)-[cytochrome c] + O2 + 8 H(+)(in) = 4 Fe(III)-[cytochrome c] + 2 H2O + 4 H(+)(out). Component of the cytochrome c oxidase, the last enzyme in the mitochondrial electron transport chain which drives oxidative phosphorylation. The respiratory chain contains 3 multisubunit complexes succinate dehydrogenase (complex II, CII), ubiquinol-cytochrome c oxidoreductase (cytochrome b-c1 complex, complex III, CIII) and cytochrome c oxidase (complex IV, CIV), that cooperate to transfer electrons derived from NADH and succinate to molecular oxygen, creating an electrochemical gradient over the inner membrane that drives transmembrane transport and the ATP synthase. Cytochrome c oxidase is the component of the respiratory chain that catalyzes the reduction of oxygen to water. Electrons originating from reduced cytochrome c in the intermembrane space (IMS) are transferred via the dinuclear copper A center (CU(A)) of subunit 2 and heme A of subunit 1 to the active site in subunit 1, a binuclear center (BNC) formed by heme A3 and copper B (CU(B)). The BNC reduces molecular oxygen to 2 water molecules using 4 electrons from cytochrome c in the IMS and 4 protons from the mitochondrial matrix. This Carassius auratus (Goldfish) protein is Cytochrome c oxidase subunit 2 (mt-co2).